We begin with the raw amino-acid sequence, 353 residues long: Photosystem II protein D1 (353 aa).

Position 2 is an N-acetylthreonine (threonine 2). Threonine 2 is modified (phosphothreonine). Transmembrane regions (helical) follow at residues 29-46 (YIGWFGVLMIPTLLTATS), 118-133 (HFLLGVACYMGREWEL), and 142-156 (WIAVAYSAPVAAATA). Histidine 118 provides a ligand contact to chlorophyll a. Tyrosine 126 lines the pheophytin a pocket. Residues aspartate 170 and glutamate 189 each coordinate [CaMn4O5] cluster. The helical transmembrane segment at 197–218 (FHMLGVAGVFGGSLFSAMHGSL) threads the bilayer. Histidine 198 is a chlorophyll a binding site. A quinone is bound by residues histidine 215 and 264-265 (SF). Histidine 215 is a Fe cation binding site. Histidine 272 contacts Fe cation. A helical transmembrane segment spans residues 274–288 (LLAAWPVVGIWFTAL). Residues histidine 332, glutamate 333, aspartate 342, and alanine 344 each contribute to the [CaMn4O5] cluster site. Residues 345-353 (AVEAPSTNG) constitute a propeptide that is removed on maturation.

This sequence belongs to the reaction center PufL/M/PsbA/D family. As to quaternary structure, PSII is composed of 1 copy each of membrane proteins PsbA, PsbB, PsbC, PsbD, PsbE, PsbF, PsbH, PsbI, PsbJ, PsbK, PsbL, PsbM, PsbT, PsbX, PsbY, PsbZ, Psb30/Ycf12, at least 3 peripheral proteins of the oxygen-evolving complex and a large number of cofactors. It forms dimeric complexes. The cofactor is The D1/D2 heterodimer binds P680, chlorophylls that are the primary electron donor of PSII, and subsequent electron acceptors. It shares a non-heme iron and each subunit binds pheophytin, quinone, additional chlorophylls, carotenoids and lipids. D1 provides most of the ligands for the Mn4-Ca-O5 cluster of the oxygen-evolving complex (OEC). There is also a Cl(-1) ion associated with D1 and D2, which is required for oxygen evolution. The PSII complex binds additional chlorophylls, carotenoids and specific lipids.. In terms of processing, tyr-161 forms a radical intermediate that is referred to as redox-active TyrZ, YZ or Y-Z. C-terminally processed by CTPA; processing is essential to allow assembly of the oxygen-evolving complex and thus photosynthetic growth.

The protein resides in the plastid. The protein localises to the chloroplast thylakoid membrane. The enzyme catalyses 2 a plastoquinone + 4 hnu + 2 H2O = 2 a plastoquinol + O2. Functionally, photosystem II (PSII) is a light-driven water:plastoquinone oxidoreductase that uses light energy to abstract electrons from H(2)O, generating O(2) and a proton gradient subsequently used for ATP formation. It consists of a core antenna complex that captures photons, and an electron transfer chain that converts photonic excitation into a charge separation. The D1/D2 (PsbA/PsbD) reaction center heterodimer binds P680, the primary electron donor of PSII as well as several subsequent electron acceptors. The polypeptide is Photosystem II protein D1 (Dioscorea elephantipes (Elephant's foot yam)).